The sequence spans 192 residues: Large ribosomal subunit protein bL25 (192 aa).

It belongs to the bacterial ribosomal protein bL25 family. CTC subfamily. Part of the 50S ribosomal subunit; part of the 5S rRNA/L5/L18/L25 subcomplex. Contacts the 5S rRNA. Binds to the 5S rRNA independently of L5 and L18.

This is one of the proteins that binds to the 5S RNA in the ribosome where it forms part of the central protuberance. This chain is Large ribosomal subunit protein bL25, found in Marinomonas sp. (strain MWYL1).